A 362-amino-acid chain; its full sequence is Cationic peroxidase SPC4 (362 aa).

Residues 1–31 (MSRAPTLAAAAAVAAVVLICSSSTATAADGN) form the signal peptide. 4 disulfide bridges follow: Cys-50/Cys-131, Cys-83/Cys-88, Cys-138/Cys-333, and Cys-218/Cys-245. His-81 acts as the Proton acceptor in catalysis. Ca(2+) contacts are provided by Asp-82, Val-85, Gly-87, Asp-89, and Ser-91. N-linked (GlcNAc...) asparagine glycosylation occurs at Asn-109. Position 111 (Thr-111) interacts with (indol-3-yl)acetate. Pro-181 serves as a coordination point for substrate. Position 211 (His-211) interacts with heme b. Residue Thr-212 coordinates Ca(2+). Asn-234 is a glycosylation site (N-linked (GlcNAc...) asparagine). The Ca(2+) site is built by Asp-257, Thr-260, Ala-263, and Asp-265. N-linked (GlcNAc...) asparagine glycosylation is present at Asn-332.

The protein belongs to the peroxidase family. Classical plant (class III) peroxidase subfamily. As to quaternary structure, monomer. The cofactor is heme b. It depends on Ca(2+) as a cofactor. The proportions of glycoforms I and II are 35% and 65% respectively. In terms of tissue distribution, present in germinated and ungerminated grain, seedlings, and leaves and stem of the mature plant.

Its subcellular location is the secreted. The enzyme catalyses 2 a phenolic donor + H2O2 = 2 a phenolic radical donor + 2 H2O. Functionally, removal of H(2)O(2), oxidation of toxic reductants, biosynthesis and degradation of lignin, suberization, auxin catabolism, response to environmental stresses such as wounding, pathogen attack and oxidative stress. These functions might be dependent on each isozyme/isoform in each plant tissue. Has a high preference for hydroxycinnamates as substrates. Substrate preference is ferulic acid &gt; p-coumaric acid &gt; N-acetyl tyrosine methyl ester &gt; N-acetyl-tyrosine &gt; tyrosine &gt; catechol &gt; Gly-Tyr-Gly. May be involved in the formation of diferulate linkages in the plant cell wall. In Sorghum bicolor (Sorghum), this protein is Cationic peroxidase SPC4.